The following is a 480-amino-acid chain: UDP-glucose 6-dehydrogenase 5 (480 aa).

NAD(+)-binding positions include Gly-8–Gly-13, Asp-33, Arg-38, Val-86–Thr-90, Ser-127–Thr-128, and Glu-161. Substrate contacts are provided by residues Glu-157–Glu-161, Lys-216–Leu-223, and Arg-256–Gly-269. Cys-272 serves as the catalytic Nucleophile. Cys-272 to Lys-275 provides a ligand contact to NAD(+). Residue Phe-334 to Lys-335 participates in substrate binding. Arg-342 contributes to the NAD(+) binding site. Ser-393 bears the Phosphoserine mark. Arg-447 provides a ligand contact to substrate.

This sequence belongs to the UDP-glucose/GDP-mannose dehydrogenase family.

It carries out the reaction UDP-alpha-D-glucose + 2 NAD(+) + H2O = UDP-alpha-D-glucuronate + 2 NADH + 3 H(+). The protein operates within nucleotide-sugar biosynthesis; UDP-alpha-D-glucuronate biosynthesis; UDP-alpha-D-glucuronate from UDP-alpha-D-glucose: step 1/1. Functionally, involved in the biosynthesis of UDP-glucuronic acid (UDP-GlcA), providing nucleotide sugars for cell-wall polymers. In Oryza sativa subsp. japonica (Rice), this protein is UDP-glucose 6-dehydrogenase 5 (UGD5).